A 78-amino-acid chain; its full sequence is Small ribosomal subunit protein bS20 (78 aa).

It belongs to the bacterial ribosomal protein bS20 family.

Its function is as follows. Binds directly to 16S ribosomal RNA. The polypeptide is Small ribosomal subunit protein bS20 (Streptococcus thermophilus (strain ATCC BAA-491 / LMD-9)).